The sequence spans 199 residues: Recombination protein RecR (199 aa).

A C4-type zinc finger spans residues 57–72 (CSICGNITEDDPCDIC). Residues 80-176 (KAVLVVEDSK…KVTRLAHGLS (97 aa)) form the Toprim domain.

This sequence belongs to the RecR family.

In terms of biological role, may play a role in DNA repair. It seems to be involved in an RecBC-independent recombinational process of DNA repair. It may act with RecF and RecO. This chain is Recombination protein RecR, found in Pediococcus pentosaceus (strain ATCC 25745 / CCUG 21536 / LMG 10740 / 183-1w).